Consider the following 245-residue polypeptide: tRNA pseudouridine synthase A 1 (245 aa).

The active-site Nucleophile is the Asp-53. Position 111 (Tyr-111) interacts with substrate.

Belongs to the tRNA pseudouridine synthase TruA family. In terms of assembly, homodimer.

The catalysed reaction is uridine(38/39/40) in tRNA = pseudouridine(38/39/40) in tRNA. In terms of biological role, formation of pseudouridine at positions 38, 39 and 40 in the anticodon stem and loop of transfer RNAs. The protein is tRNA pseudouridine synthase A 1 of Clostridium tetani (strain Massachusetts / E88).